The sequence spans 166 residues: MKNEAYYQAYLSHHHISRRGLLRHVFPATKSTIEKTQSRPPFSAREDLFSAVCNGCGECASACPNGLIQLKQQQATLEIDYAPCDLCGKCAEVCPTNALHPNFPGDTLLRPQFSSACLILQNQTCPDCQTACPLQAISSTLEIDNERCNGCGECKITCFVAAITLK.

4Fe-4S ferredoxin-type domains are found at residues 44–73, 75–104, and 139–166; these read ARED…LKQQ, ATLE…PNFP, and STLE…ITLK. Cys-53, Cys-56, Cys-59, Cys-63, Cys-84, Cys-87, Cys-90, and Cys-94 together coordinate [4Fe-4S] cluster.

This is an uncharacterized protein from Haemophilus influenzae (strain ATCC 51907 / DSM 11121 / KW20 / Rd).